The chain runs to 785 residues: Protein PHTF2 (785 aa).

In terms of domain architecture, PHTF spans 46 to 191; it reads IQCLIGAYDQ…VHCQIVSTRT (146 aa). A run of 2 helical transmembrane segments spans residues 136-156 and 164-184; these read VIFF…VLFC and IPLT…TVHC. 2 disordered regions span residues 190–239 and 304–401; these read RTPK…GTST and RPEE…PESE. The span at 200–209 shows a compositional bias: basic residues; it reads GKRRRKLRKA. Residues 210–219 show a composition bias toward basic and acidic residues; that stretch reads AHLEVHREGD. 2 stretches are compositionally biased toward polar residues: residues 220 to 239 and 309 to 333; these read GSST…GTST and AWNT…VSDE. Asparagine 329 carries an N-linked (GlcNAc...) asparagine glycan. The span at 359–369 shows a compositional bias: basic residues; that stretch reads RNRKSHHYKKH. Residues 378 to 390 show a composition bias toward low complexity; sequence SGTSCSSRCSSSR. Residues 391-400 are compositionally biased toward basic and acidic residues; the sequence is QDSESARPES. The next 4 membrane-spanning stretches (helical) occupy residues 497 to 517, 553 to 573, 634 to 654, and 668 to 688; these read IGYQ…PFVF, VIIS…LLCV, VIVS…CAQL, and WELV…VTLG. N-linked (GlcNAc...) asparagine glycosylation is found at asparagine 697 and asparagine 756. A helical membrane pass occupies residues 760 to 780; it reads VVILSAVSGVISDLLGFNLKL.

The protein localises to the membrane. The protein is Protein PHTF2 (PHTF2) of Homo sapiens (Human).